A 123-amino-acid polypeptide reads, in one-letter code: Neuropeptide-like peptides nlp-40 (123 aa).

A signal peptide spans 1–17 (MKLVILLSFVATVAVFA). 3 propeptides span residues 30–31 (RA), 66–67 (KR), and 75–76 (KR).

In terms of tissue distribution, expressed in intestinal cells.

The protein localises to the secreted. The protein resides in the cytoplasmic vesicle. Functionally, neuropeptide ligand for the G-protein coupled receptor aex-2. Activates and regulates the rhythmic calcium influx in DVB GABergic neurons during the defecation motor program, which is a coordinated series of three muscle contractions that occurs every 45 seconds. This is Neuropeptide-like peptides nlp-40 from Caenorhabditis elegans.